Here is a 259-residue protein sequence, read N- to C-terminus: Haloacid dehalogenase-like hydrolase domain-containing protein 2 (259 aa).

Aspartate 13 and serine 15 together coordinate Mg(2+). Residues 13-15 and 46-47 contribute to the substrate site; these read DLS and TN. Positions 47–71 form a coiled coil; it reads NTTKESKQDLLERLRKLEFDISEDE. Lysine 50 carries the post-translational modification N6-succinyllysine. A substrate-binding site is contributed by lysine 179. A Mg(2+)-binding site is contributed by aspartate 204.

It belongs to the HAD-like hydrolase superfamily. It depends on Mg(2+) as a cofactor.

This is Haloacid dehalogenase-like hydrolase domain-containing protein 2 (HDHD2) from Homo sapiens (Human).